The chain runs to 252 residues: MIKKRIIPCLDVKDGRVVKGIQFKGLRDIGNPVDLAMYYNEAGADELVFLDISKTEEGHSLMLEVIEQTASRLFIPLTVGGGIQSLDDITQLLNHGADKVSLNSSALKNPQLIKQASDKFGRQCICIAIDSYYDPERKAHYCCTHGGKKLTNIKVYDWVQQVEQLGAGELLVTSMGHDGMKQGFDIEHLAKIKSLVNIPIIASGGGGNAQHFVELFDQTDVSAGLAASILHDRETTVQSIKEAIRQGGIAVR.

Catalysis depends on residues D11 and D130.

It belongs to the HisA/HisF family. Heterodimer of HisH and HisF.

The protein localises to the cytoplasm. The enzyme catalyses 5-[(5-phospho-1-deoxy-D-ribulos-1-ylimino)methylamino]-1-(5-phospho-beta-D-ribosyl)imidazole-4-carboxamide + L-glutamine = D-erythro-1-(imidazol-4-yl)glycerol 3-phosphate + 5-amino-1-(5-phospho-beta-D-ribosyl)imidazole-4-carboxamide + L-glutamate + H(+). The protein operates within amino-acid biosynthesis; L-histidine biosynthesis; L-histidine from 5-phospho-alpha-D-ribose 1-diphosphate: step 5/9. Its function is as follows. IGPS catalyzes the conversion of PRFAR and glutamine to IGP, AICAR and glutamate. The HisF subunit catalyzes the cyclization activity that produces IGP and AICAR from PRFAR using the ammonia provided by the HisH subunit. This chain is Imidazole glycerol phosphate synthase subunit HisF, found in Staphylococcus aureus (strain MRSA252).